The sequence spans 221 residues: N-acetyltransferase 8F1 (221 aa).

A helical transmembrane segment spans residues 53-73; sequence LVLVSGSWLLAVVCIFFLLLL. In terms of domain architecture, N-acetyltransferase spans 69-219; the sequence is FLLLLLRFLA…RTIQLKYPFP (151 aa).

Belongs to the camello family.

It is found in the membrane. May play a role in regulation of gastrulation. The sequence is that of N-acetyltransferase 8F1 from Rattus norvegicus (Rat).